A 372-amino-acid chain; its full sequence is Cobalt-precorrin-5B C(1)-methyltransferase (372 aa).

It belongs to the CbiD family.

The catalysed reaction is Co-precorrin-5B + S-adenosyl-L-methionine = Co-precorrin-6A + S-adenosyl-L-homocysteine. It functions in the pathway cofactor biosynthesis; adenosylcobalamin biosynthesis; cob(II)yrinate a,c-diamide from sirohydrochlorin (anaerobic route): step 6/10. Functionally, catalyzes the methylation of C-1 in cobalt-precorrin-5B to form cobalt-precorrin-6A. The protein is Cobalt-precorrin-5B C(1)-methyltransferase of Prochlorococcus marinus subsp. pastoris (strain CCMP1986 / NIES-2087 / MED4).